A 201-amino-acid polypeptide reads, in one-letter code: Putative manganese efflux pump MntP 2 (201 aa).

Transmembrane regions (helical) follow at residues 3–23 (LISV…VSIT), 39–59 (IGLF…SIGI), 65–85 (IAAL…GKMI), 116–136 (LILL…SFAF), 141–161 (IINT…IGVM), and 176–196 (ILGG…HTNI).

The protein belongs to the MntP (TC 9.B.29) family.

It localises to the cell membrane. Its function is as follows. Probably functions as a manganese efflux pump. This Clostridium botulinum (strain Hall / ATCC 3502 / NCTC 13319 / Type A) protein is Putative manganese efflux pump MntP 2.